A 160-amino-acid polypeptide reads, in one-letter code: Cell division protein SepF (160 aa).

A compositionally biased stretch (acidic residues) spans 18–30; the sequence is AEGEDDFEDDVDT. Residues 18-72 form a disordered region; that stretch reads AEGEDDFEDDVDTGETSFDSDHSVTPMPSSSASASTPSAPREQSNPFQGGRVSRI. Positions 45 to 57 are enriched in low complexity; sequence PSSSASASTPSAP.

Belongs to the SepF family. In terms of assembly, homodimer. Interacts with FtsZ.

Its subcellular location is the cytoplasm. Functionally, cell division protein that is part of the divisome complex and is recruited early to the Z-ring. Probably stimulates Z-ring formation, perhaps through the cross-linking of FtsZ protofilaments. Its function overlaps with FtsA. The protein is Cell division protein SepF of Bifidobacterium adolescentis (strain ATCC 15703 / DSM 20083 / NCTC 11814 / E194a).